The chain runs to 167 residues: V-type proton ATPase subunit c' (167 aa).

Over 1–13 (MAEIMADSELAPK) the chain is Lumenal. A helical transmembrane segment spans residues 14–34 (FAPFIGMAGIAAAMIFGSAGA). Over 35-59 (AYGTAKSGIGIAGVGTFRPDLIMKC) the chain is Cytoplasmic. Residues 60-80 (LIPVVMSGIIAVYALVVAVLI) traverse the membrane as a helical segment. The Lumenal portion of the chain corresponds to 81–101 (AQDLGPPGSGQHYSLFNGFMH). A helical membrane pass occupies residues 102 to 122 (LACGLSVGLTGLAAGYCIGIV). At 123-140 (GDKGVRSFMLQSRIFVGM) the chain is on the cytoplasmic side. Residues 141 to 161 (VLILIFGEVLGLYGLIVALIL) traverse the membrane as a helical segment. At 162–167 (NTKSKG) the chain is on the lumenal side.

Belongs to the V-ATPase proteolipid subunit family. In terms of assembly, V-ATPase is a heteromultimeric enzyme composed of a peripheral catalytic V1 complex (components A to H) attached to an integral membrane V0 proton pore complex (components: a, c, c', c'', d, e, f and VOA1). The decameric c-ring forms the proton-conducting pore, and is composed of eight proteolipid subunits c, one subunit c' and one subunit c''.

It localises to the vacuole membrane. Functionally, proton-conducting pore forming subunit of the V0 complex of vacuolar(H+)-ATPase (V-ATPase), a multisubunit enzyme composed of a peripheral complex (V1) that hydrolyzes ATP and a membrane integral complex (V0) that translocates protons. V-ATPase is responsible for acidifying and maintaining the pH of intracellular compartments. The protein is V-type proton ATPase subunit c' (vma-11) of Neurospora crassa (strain ATCC 24698 / 74-OR23-1A / CBS 708.71 / DSM 1257 / FGSC 987).